We begin with the raw amino-acid sequence, 427 residues long: Trigger factor (427 aa).

The 86-residue stretch at 163 to 248 (GDTVVIDFVG…VHEVKAKEVP (86 aa)) folds into the PPIase FKBP-type domain.

Belongs to the FKBP-type PPIase family. Tig subfamily.

It localises to the cytoplasm. It carries out the reaction [protein]-peptidylproline (omega=180) = [protein]-peptidylproline (omega=0). In terms of biological role, involved in protein export. Acts as a chaperone by maintaining the newly synthesized protein in an open conformation. Functions as a peptidyl-prolyl cis-trans isomerase. This is Trigger factor from Streptococcus equi subsp. equi (strain 4047).